The following is a 258-amino-acid chain: Imidazole glycerol phosphate synthase subunit HisF (258 aa).

Active-site residues include aspartate 12 and aspartate 131.

Belongs to the HisA/HisF family. As to quaternary structure, heterodimer of HisH and HisF.

The protein resides in the cytoplasm. It carries out the reaction 5-[(5-phospho-1-deoxy-D-ribulos-1-ylimino)methylamino]-1-(5-phospho-beta-D-ribosyl)imidazole-4-carboxamide + L-glutamine = D-erythro-1-(imidazol-4-yl)glycerol 3-phosphate + 5-amino-1-(5-phospho-beta-D-ribosyl)imidazole-4-carboxamide + L-glutamate + H(+). It participates in amino-acid biosynthesis; L-histidine biosynthesis; L-histidine from 5-phospho-alpha-D-ribose 1-diphosphate: step 5/9. Functionally, IGPS catalyzes the conversion of PRFAR and glutamine to IGP, AICAR and glutamate. The HisF subunit catalyzes the cyclization activity that produces IGP and AICAR from PRFAR using the ammonia provided by the HisH subunit. The polypeptide is Imidazole glycerol phosphate synthase subunit HisF (Nitrosomonas europaea (strain ATCC 19718 / CIP 103999 / KCTC 2705 / NBRC 14298)).